The sequence spans 308 residues: uncharacterized protein (308 aa).

An HTH lysR-type domain is found at 1 to 60; sequence MNYSLKQLKVFVTVAQEKSFSRAGERIGLSQSAVSHSVKELENHTGVRLLDRTTREVVLT. A DNA-binding region (H-T-H motif) is located at residues 20-39; it reads FSRAGERIGLSQSAVSHSVK.

Belongs to the LysR transcriptional regulatory family.

This is an uncharacterized protein from Shigella flexneri.